Reading from the N-terminus, the 228-residue chain is Protein Iojap, chloroplastic (228 aa).

The segment at 1 to 54 (MGGTSAAVPSHGLACAPPAAVTLNPRARRRRASSGSGGHRSSPQQPLRSDLLPP) is disordered. The N-terminal 62 residues, 1–62 (MGGTSAAVPS…PPATVACRAR (62 aa)), are a transit peptide targeting the chloroplast.

Belongs to the Iojap/RsfS family. In terms of assembly, interacts with chloroplast ribosomal protein uL14c (rpl14).

The protein resides in the plastid. The protein localises to the chloroplast. Functionally, may be a ribosome silencing factor (Potential). Involved in plastid biogenesis. Plastids affected by a mutation in Iojap lose the ability to perform translation and lack plastid ribosomes. The chain is Protein Iojap, chloroplastic (Ij) from Zea mays (Maize).